Here is a 271-residue protein sequence, read N- to C-terminus: Fork head domain-containing protein FD5 (271 aa).

Positions 12–103 (QKPPYSYISL…FDMFENGSLL (92 aa)) form a DNA-binding region, fork-head.

Expressed in early embryogenesis in 14 symmetrical pairs of segmentally arranged neuroblasts and in developing peripheral nervous system. Also, later in embryogenesis, in a cluster of cells in head region.

The protein localises to the nucleus. Its function is as follows. Involved in development during embryogenesis. The polypeptide is Fork head domain-containing protein FD5 (fd96Cb) (Drosophila melanogaster (Fruit fly)).